Here is a 225-residue protein sequence, read N- to C-terminus: Histone H1.5 (225 aa).

Positions 1–23 (MSDVAVAETPAVKTPTKASKATK) are disordered. Ser2 is subject to N-acetylserine. Residues 9-19 (TPAVKTPTKAS) are compositionally biased toward low complexity. The region spanning 37 to 113 (AHPPFINMIT…GANGRFRLAV (77 aa)) is the H15 domain. The span at 145-156 (KKTVAKKTGDKV) shows a compositional bias: basic and acidic residues. A disordered region spans residues 145–225 (KKTVAKKTGD…RKAVGTAPKA (81 aa)). Basic residues predominate over residues 157-175 (KKVKSPKRIAKPAVKKVTK). Positions 176-208 (KAAAPTKSAANETAPKKAAATEAAPKKAAVTKA) are enriched in low complexity.

This sequence belongs to the histone H1/H5 family.

It localises to the nucleus. The protein localises to the chromosome. Its function is as follows. Histones H1 are necessary for the condensation of nucleosome chains into higher-order structures. This is Histone H1.5 (hil-5) from Caenorhabditis elegans.